Here is a 307-residue protein sequence, read N- to C-terminus: Ribosomal protein L11 methyltransferase (307 aa).

Residues Thr-154, Gly-178, Asp-200, and Asn-242 each contribute to the S-adenosyl-L-methionine site.

Belongs to the methyltransferase superfamily. PrmA family.

The protein resides in the cytoplasm. It catalyses the reaction L-lysyl-[protein] + 3 S-adenosyl-L-methionine = N(6),N(6),N(6)-trimethyl-L-lysyl-[protein] + 3 S-adenosyl-L-homocysteine + 3 H(+). Its function is as follows. Methylates ribosomal protein L11. This Syntrophotalea carbinolica (strain DSM 2380 / NBRC 103641 / GraBd1) (Pelobacter carbinolicus) protein is Ribosomal protein L11 methyltransferase.